Here is a 356-residue protein sequence, read N- to C-terminus: MADAAVIEKLEEGFKKLEAATDCKSLLKKYLTKSVFDQLKGKKTSLGATLLDVIQSGVENLDSGVGVYAPDAEAYTLFAPLFDPIIEDYHKGFKQTDKHPNKDFGDVNQFVNVDPDGKFVISTRVRCGRSMEGYPFNPCLTEAQYKEMESKVSSTLSNLEGELKGTYYPLTGMTKDVQQKLIDDHFLFKEGDRFLQAANACRYWPTGRGIYHNDNKTFLVWCNEEDHLRIISMQMGGDLGQVYRRLVSAVNEIEKRVPFSHHDRLGFLTFCPTNLGTTVRASVHIKLPKLAANREKLEEVAGKYSLQVRGTRGEHTEAEGGVYDISNKRRMGLTEFQAVKEMQDGILELIKMEKEM.

Residues 9–91 form the Phosphagen kinase N-terminal domain; the sequence is KLEEGFKKLE…FDPIIEDYHK (83 aa). Position 64 to 68 (64 to 68) interacts with L-arginine; the sequence is GVGVY. In terms of domain architecture, Phosphagen kinase C-terminal spans 119–356; it reads FVISTRVRCG…LELIKMEKEM (238 aa). ATP contacts are provided by residues 122 to 126 and histidine 185; that span reads STRVR. Glutamate 225 is a binding site for L-arginine. Arginine 229 serves as a coordination point for ATP. Cysteine 271 is an L-arginine binding site. Residues 280 to 284 and 309 to 314 each bind ATP; these read RASVH and RGTRGE. Residue glutamate 314 participates in L-arginine binding.

The protein belongs to the ATP:guanido phosphotransferase family. Muscle (at protein level).

It carries out the reaction L-arginine + ATP = N(omega)-phospho-L-arginine + ADP + H(+). Functionally, catalyzes the reversible transfer of high energy ATP gamma-phosphate group to L-arginine. This chain is Arginine kinase Scy s 2, found in Scylla serrata (Mud crab).